A 351-amino-acid polypeptide reads, in one-letter code: Short-chain dehydrogenase sdnK (351 aa).

NADP(+) contacts are provided by Ile46, Thr66, Glu98, Tyr224, Lys228, and Thr268. Catalysis depends on Tyr224, which acts as the Proton donor. Lys228 acts as the Lowers pKa of active site Tyr in catalysis.

Belongs to the short-chain dehydrogenases/reductases (SDR) family.

It participates in antibiotic biosynthesis. Its function is as follows. Short-chain dehydrogenase; part of the gene cluster that mediates the biosynthesis of sordarin and hypoxysordarin, glycoside antibiotics with a unique tetracyclic diterpene aglycone structure. First, the geranylgeranyl diphosphate synthase sdnC constructs GGDP from farnesyl diphosphate and isopentenyl diphosphate. The diterpene cyclase sdnA then catalyzes the cyclization of GGDP to afford cycloaraneosene. Cycloaraneosene is then hydroxylated four times by the putative cytochrome P450 monooxygenases sdnB, sdnE, sdnF and sdnH to give a hydroxylated cycloaraneosene derivative such as cycloaraneosene-8,9,13,19-tetraol. Although the order of the hydroxylations is unclear, at least C8, C9 and C13 of the cycloaraneosene skeleton are hydroxylated before the sordaricin formation. Dehydration of the 13-hydroxy group of the hydroxylated cycloaraneosene derivative might be catalyzed by an unassigned hypothetical protein such as sdnG and sdnP to construct the cyclopentadiene moiety. The FAD-dependent oxidoreductase sdnN is proposed to catalyze the oxidation at C9 of the hydroxylated cycloaraneosene derivative and also catalyze the Baeyer-Villiger oxidation to give the lactone intermediate. The presumed lactone intermediate would be hydrolyzed to give an acrolein moiety and a carboxylate moiety. Then, [4+2]cycloaddition would occur between the acrolein moiety and the cyclopentadiene moiety to give sordaricin. SdnN might also be involved in the [4+2]cycloaddition after the hypothesized oxidation to accommodate the oxidized product and prompt the [4+2]cycloaddition. GDP-6-deoxy-D-altrose may be biosynthesized from GDP-D-mannose by the putative GDP-mannose-4,6-dehydratase sdnI and the short-chain dehydrogenase sdnK. The glycosyltransferase sdnJ catalyzes the attachment of 6-deoxy-D-altrose onto the 19-hydroxy group of sordaricin to give 4'-O-demethylsordarin. The methyltransferase sdnD would complete the biosynthesis of sordarin. Sordarin can be further modified into hypoxysordarin. The unique acyl chain at the 3'-hydroxy group of hypoxysordarin would be constructed by an iterative type I PKS sdnO and the trans-acting polyketide methyltransferase sdnL. SdnL would be responsible for the introduction of an alpha-methyl group of the polyketide chain. Alternatively, the beta-lactamase-like protein sdnR might be responsible for the cleavage and transfer of the polyketide chain from the PKS sdnO to sordarin. Two putative cytochrome P450 monooxygenases, sdnQ and sdnT, might catalyze the epoxidations of the polyketide chain to complete the biosynthesis of hypoxysordarin. Transcriptional regulators sdnM and sdnS are presumably encoded for the transcriptional regulation of the expression of the sdn gene cluster. The protein is Short-chain dehydrogenase sdnK of Sordaria araneosa (Pleurage araneosa).